The chain runs to 224 residues: Transposase for insertion sequence-like element IS431mec (224 aa).

A DNA-binding region (H-T-H motif) is located at residues 33 to 52; sequence EILRERGVNVHHSTVYRWVQ. An Integrase catalytic domain is found at 73–222; it reads WRIDETYIKI…SPCHEISIML (150 aa).

In terms of biological role, involved in the transposition of the insertion sequence. This is Transposase for insertion sequence-like element IS431mec (tnp) from Staphylococcus aureus (strain NCTC 8325 / PS 47).